A 386-amino-acid chain; its full sequence is Cytochrome b (386 aa).

4 helical membrane passes run 32-52 (LGSL…FLAM), 76-98 (YLIR…AHIG), 113-133 (VWVI…LGYC), and 179-199 (FFAL…MHLM). Heme b is bound by residues His82 and His96. 2 residues coordinate heme b: His183 and His197. His202 serves as a coordination point for a ubiquinone. Transmembrane regions (helical) follow at residues 225–245 (FVFK…LFVF), 289–309 (LGGV…PVTD), 321–341 (ISKT…QLGQ), and 348–368 (FIQL…FIVP).

This sequence belongs to the cytochrome b family. Fungal cytochrome b-c1 complex contains 10 subunits; 3 respiratory subunits, 2 core proteins and 5 low-molecular weight proteins. Cytochrome b-c1 complex is a homodimer. Heme b serves as cofactor.

Its subcellular location is the mitochondrion inner membrane. Component of the ubiquinol-cytochrome c reductase complex (complex III or cytochrome b-c1 complex) that is part of the mitochondrial respiratory chain. The b-c1 complex mediates electron transfer from ubiquinol to cytochrome c. Contributes to the generation of a proton gradient across the mitochondrial membrane that is then used for ATP synthesis. This is Cytochrome b (COB) from Wickerhamomyces canadensis (Yeast).